Here is a 148-residue protein sequence, read N- to C-terminus: Phage-like element PBSX protein XkdN (148 aa).

To B.subtilis YqbN.

In Bacillus subtilis (strain 168), this protein is Phage-like element PBSX protein XkdN (xkdN).